A 248-amino-acid polypeptide reads, in one-letter code: MQYNFKVESFEGPLDLLLHLIHRYEIDIYNIPVAEITEQYLSYIHTMKELQLDVASEYLVMAATLLQIKSKMLLPKQEEDVHDSGEDFIDDPRQELMERLIEYKKYKQVAAELKEREQERAQLYTRPPIDFTSFQQEEAANLPLDVTLYDMLAAFQKMMRRKKSKRPVTARITRQEIPIEQRMTDILQKLETLGGRQSFYDLFADEEREVMVVTFLAILELMKHQQIVIEQEQNFDEIFLSCANHNSK.

This sequence belongs to the ScpA family. Component of a cohesin-like complex composed of ScpA, ScpB and the Smc homodimer, in which ScpA and ScpB bind to the head domain of Smc. The presence of the three proteins is required for the association of the complex with DNA.

It is found in the cytoplasm. Participates in chromosomal partition during cell division. May act via the formation of a condensin-like complex containing Smc and ScpB that pull DNA away from mid-cell into both cell halves. The sequence is that of Segregation and condensation protein A from Bacillus cytotoxicus (strain DSM 22905 / CIP 110041 / 391-98 / NVH 391-98).